Reading from the N-terminus, the 310-residue chain is D-apiose import binding protein (310 aa).

An N-terminal signal peptide occupies residues methionine 1–alanine 21. Residues asparagine 35, aspartate 111–arginine 112, aspartate 158–asparagine 160, arginine 164, asparagine 214, aspartate 239, and glutamine 260 each bind D-apiofuranose.

The protein belongs to the bacterial solute-binding protein 2 family.

Its subcellular location is the periplasm. In terms of biological role, part of an ABC transporter complex involved in D-apiose import. Binds D-apiose, D-ribose and D-ribulose. The sequence is that of D-apiose import binding protein from Actinobacillus succinogenes (strain ATCC 55618 / DSM 22257 / CCUG 43843 / 130Z).